Here is a 375-residue protein sequence, read N- to C-terminus: MSELDYYSLLEVERTADDKTIKTSYRRLAMRYHPDRNPGDSDAEERFKAISEAYDCLKDPQKRAAYDRYGKDAFQGGGGFGGFGGGAQDFGGFSDIFESVFGEFMGGRGQARSSVQRGADLRYDLKISLEEAFKGKTVDIEIDVASVCDACHGSGAKAGSGRKTCDTCHGSGRIRVQQGFFVVEQSCPVCQGKGEVISDPCPECHGEGRCEKHKTLSVNIPAGVDDGTRIRLSGEGEAGVHGGPAGDLYIFIHVTPHQVFQRESYNLFAHVPISFTKAALGGSIHVPSLDGEQYEISIPAGIQSGKQLKRRGAGMPVLNGRGRGDLIIQIDVETPTRLTAKQRELLEQFRETETGEECPKSSGFFSKLKTILTGE.

Residues 5–70 (DYYSLLEVER…QKRAAYDRYG (66 aa)) enclose the J domain. The CR-type zinc finger occupies 135–213 (GKTVDIEIDV…CHGEGRCEKH (79 aa)). Cysteine 148, cysteine 151, cysteine 165, cysteine 168, cysteine 187, cysteine 190, cysteine 201, and cysteine 204 together coordinate Zn(2+). CXXCXGXG motif repeat units follow at residues 148 to 155 (CDACHGSG), 165 to 172 (CDTCHGSG), 187 to 194 (CPVCQGKG), and 201 to 208 (CPECHGEG).

The protein belongs to the DnaJ family. In terms of assembly, homodimer. Requires Zn(2+) as cofactor.

Its subcellular location is the cytoplasm. Its function is as follows. Participates actively in the response to hyperosmotic and heat shock by preventing the aggregation of stress-denatured proteins and by disaggregating proteins, also in an autonomous, DnaK-independent fashion. Unfolded proteins bind initially to DnaJ; upon interaction with the DnaJ-bound protein, DnaK hydrolyzes its bound ATP, resulting in the formation of a stable complex. GrpE releases ADP from DnaK; ATP binding to DnaK triggers the release of the substrate protein, thus completing the reaction cycle. Several rounds of ATP-dependent interactions between DnaJ, DnaK and GrpE are required for fully efficient folding. Also involved, together with DnaK and GrpE, in the DNA replication of plasmids through activation of initiation proteins. The sequence is that of Chaperone protein DnaJ from Zymomonas mobilis subsp. mobilis (strain ATCC 31821 / ZM4 / CP4).